Consider the following 452-residue polypeptide: Enolase (452 aa).

Position 167 (Gln167) interacts with (2R)-2-phosphoglycerate. Glu209 acts as the Proton donor in catalysis. Positions 250, 310, and 337 each coordinate Mg(2+). (2R)-2-phosphoglycerate is bound by residues Lys362, Arg391, Ser392, and Lys413. Catalysis depends on Lys362, which acts as the Proton acceptor.

This sequence belongs to the enolase family. Requires Mg(2+) as cofactor.

It is found in the cytoplasm. Its subcellular location is the secreted. The protein localises to the cell surface. The catalysed reaction is (2R)-2-phosphoglycerate = phosphoenolpyruvate + H2O. It functions in the pathway carbohydrate degradation; glycolysis; pyruvate from D-glyceraldehyde 3-phosphate: step 4/5. Catalyzes the reversible conversion of 2-phosphoglycerate (2-PG) into phosphoenolpyruvate (PEP). It is essential for the degradation of carbohydrates via glycolysis. The sequence is that of Enolase from Mycoplasmopsis synoviae (strain 53) (Mycoplasma synoviae).